Reading from the N-terminus, the 617-residue chain is tRNA 5-methylaminomethyl-2-thiouridine biosynthesis bifunctional protein MnmC (617 aa).

Positions 1 to 226 (MLDWQNGQLY…KREMLQGDLP (226 aa)) are tRNA (mnm(5)s(2)U34)-methyltransferase. The interval 241–617 (IGGGIAGCAA…SPAIPVSIKG (377 aa)) is FAD-dependent cmnm(5)s(2)U34 oxidoreductase.

It in the N-terminal section; belongs to the methyltransferase superfamily. tRNA (mnm(5)s(2)U34)-methyltransferase family. In the C-terminal section; belongs to the DAO family. It depends on FAD as a cofactor.

It is found in the cytoplasm. The enzyme catalyses 5-aminomethyl-2-thiouridine(34) in tRNA + S-adenosyl-L-methionine = 5-methylaminomethyl-2-thiouridine(34) in tRNA + S-adenosyl-L-homocysteine + H(+). Functionally, catalyzes the last two steps in the biosynthesis of 5-methylaminomethyl-2-thiouridine (mnm(5)s(2)U) at the wobble position (U34) in tRNA. Catalyzes the FAD-dependent demodification of cmnm(5)s(2)U34 to nm(5)s(2)U34, followed by the transfer of a methyl group from S-adenosyl-L-methionine to nm(5)s(2)U34, to form mnm(5)s(2)U34. The chain is tRNA 5-methylaminomethyl-2-thiouridine biosynthesis bifunctional protein MnmC from Nitrosospira multiformis (strain ATCC 25196 / NCIMB 11849 / C 71).